Reading from the N-terminus, the 464-residue chain is MKPVRTRFAPSPTGYLHIGGARTALFSWAYARRHGGDFILRIEDTDVARSTPEAVQAILDGMQWLGLEHDEGPFYQMQRMDRYKEVIQQMLANGSAYYCYTTREELDALRAEQEAKKEKPRYDGRWRPEAGKALPVPPTDVPPVIRFKNPQGGVVAWDDQVKGRIEFANTELDDLIIARADGTPTYNFCVCVDDWDMGITHVIRGDDHVNNTPRQINILKALGAEVPTYAHLSMILGDDGAKLSKRHGAVSVMQYDEEGFLTEAVINYLARLGWSHGDDEVFSRQQFVEWFDLDHITASAAQFNTEKLLWLNQHYMKQLPPAELAAKVQARLTARGVDTANGPDLEKAVVLYVDRSNTLNVLADAVEVFYAHVTPNPELLAQHLADDARPALAEFAAGIATVTWEAPAINALIKETVTKHGLKMPKLAMPLRVILTGQAQTPAVDAVIALIGRDKVAATLAAYL.

The 'HIGH' region motif lies at 10–20; sequence PSPTGYLHIGG. Over residues 113 to 130 the composition is skewed to basic and acidic residues; it reads QEAKKEKPRYDGRWRPEA. Positions 113–142 are disordered; it reads QEAKKEKPRYDGRWRPEAGKALPVPPTDVP. Residues 242-246 carry the 'KMSKS' region motif; sequence KLSKR. K245 is a binding site for ATP.

Belongs to the class-I aminoacyl-tRNA synthetase family. Glutamate--tRNA ligase type 1 subfamily. Monomer.

It localises to the cytoplasm. It carries out the reaction tRNA(Glu) + L-glutamate + ATP = L-glutamyl-tRNA(Glu) + AMP + diphosphate. Functionally, catalyzes the attachment of glutamate to tRNA(Glu) in a two-step reaction: glutamate is first activated by ATP to form Glu-AMP and then transferred to the acceptor end of tRNA(Glu). The polypeptide is Glutamate--tRNA ligase (Dechloromonas aromatica (strain RCB)).